The chain runs to 424 residues: uncharacterized protein (424 aa).

The protein belongs to the serpin family.

This is an uncharacterized protein from Methanosarcina acetivorans (strain ATCC 35395 / DSM 2834 / JCM 12185 / C2A).